The primary structure comprises 77 residues: Omega-conotoxin-like SO-5 (77 aa).

Positions 1–22 (MKLTCVMIVAVLLLTACQLITA) are cleaved as a signal peptide. The propeptide occupies 23–42 (DDSRGTQKHRSLRSTTKVSK). 3 cysteine pairs are disulfide-bonded: Cys46-Cys61, Cys53-Cys64, and Cys60-Cys71.

This sequence belongs to the conotoxin O1 superfamily. Expressed by the venom duct.

The protein resides in the secreted. Omega-conotoxins act at presynaptic membranes, they bind and block voltage-gated calcium channels (Cav). In Conus striatus (Striated cone), this protein is Omega-conotoxin-like SO-5 (SO5).